We begin with the raw amino-acid sequence, 235 residues long: Protein Thf1 (235 aa).

Residues 179-228 (LNLSSDKLQKDLDLYRSNVDKMGQLLAVIEDALEAERKKREKAKQEVATT) adopt a coiled-coil conformation.

It belongs to the THF1 family.

In terms of biological role, may be involved in photosynthetic membrane biogenesis. The sequence is that of Protein Thf1 from Rippkaea orientalis (strain PCC 8801 / RF-1) (Cyanothece sp. (strain PCC 8801)).